The following is an 80-amino-acid chain: Small ribosomal subunit protein bS18 (80 aa).

It belongs to the bacterial ribosomal protein bS18 family. As to quaternary structure, part of the 30S ribosomal subunit. Forms a tight heterodimer with protein bS6.

Functionally, binds as a heterodimer with protein bS6 to the central domain of the 16S rRNA, where it helps stabilize the platform of the 30S subunit. The protein is Small ribosomal subunit protein bS18 of Methylocella silvestris (strain DSM 15510 / CIP 108128 / LMG 27833 / NCIMB 13906 / BL2).